The chain runs to 1035 residues: Condensin complex subunit 3 (1035 aa).

HEAT repeat units follow at residues 113 to 150 (RFVD…NIGE) and 153 to 191 (ESLF…EEQT). Residue Ser-198 is modified to Phosphoserine. The HEAT 3 repeat unit spans residues 201–239 (EENFEATRTLVASIQNDPSAEVRRAAMLNLINDNNTRPY). Positions 500–536 (EEKIKSKKINRRNETSVDEEDENGTHNDEVNEDEEDD) are disordered. HEAT repeat units lie at residues 597-635 (ILIA…LDVK) and 827-864 (VQLT…SSEQ). Positions 909–919 (ERSETQTKDEN) are enriched in basic and acidic residues. Disordered regions lie at residues 909-934 (ERSE…GNSF) and 959-995 (TTVN…LENM). Composition is skewed to polar residues over residues 920–934 (NTAN…GNSF) and 959–973 (TTVN…TEQS). Ser-933 carries the post-translational modification Phosphoserine. Ser-981 carries the post-translational modification Phosphoserine. Positions 986–995 (IDTSKNLENM) are enriched in polar residues. Ser-1008 is subject to Phosphoserine. The tract at residues 1012-1035 (PDEKSDAMSIDEEDKDSESFSEVC) is disordered.

This sequence belongs to the CND3 (condensin subunit 3) family. In terms of assembly, component of the condensin complex, which contains the SMC2 and SMC4 heterodimer, and three non SMC subunits that probably regulate the complex: BRN1, YCS4 and YCG1/YCS5.

It is found in the nucleus. The protein resides in the cytoplasm. The protein localises to the chromosome. Functionally, regulatory subunit of the condensin complex, a complex required for conversion of interphase chromatin into mitotic-like condense chromosomes. The condensin complex probably introduces positive supercoils into relaxed DNA in the presence of type I topoisomerases and converts nicked DNA into positive knotted forms in the presence of type II topoisomerases. The condensin complex probably also plays a role during interphase. The chain is Condensin complex subunit 3 (YCG1) from Saccharomyces cerevisiae (strain ATCC 204508 / S288c) (Baker's yeast).